The following is a 498-amino-acid chain: Phosphoethanolamine N-methyltransferase 1 (498 aa).

S-adenosyl-L-homocysteine-binding residues include glycine 68, arginine 73, aspartate 89, aspartate 115, valine 116, and asparagine 134. The phosphocholine site is built by serine 167, serine 172, glycine 173, arginine 177, and tyrosine 184. Residues 253 to 254 and tyrosine 262 each bind N-methylethanolamine phosphate; that span reads QY. Tyrosine 262 is a phosphocholine binding site. Residues valine 271, serine 272, glycine 298, aspartate 320, aspartate 346, cysteine 347, and arginine 363 each coordinate S-adenosyl-L-homocysteine. Positions 394, 408, 412, 414, and 480 each coordinate phosphocholine. Residues tyrosine 394, tyrosine 408, 412 to 414, and lysine 480 contribute to the N-methylethanolamine phosphate site; that span reads RGY.

This sequence belongs to the class I-like SAM-binding methyltransferase superfamily. PEAMT family.

The enzyme catalyses phosphoethanolamine + S-adenosyl-L-methionine = N-methylethanolamine phosphate + S-adenosyl-L-homocysteine + H(+). The catalysed reaction is N-methylethanolamine phosphate + S-adenosyl-L-methionine = N,N-dimethylethanolamine phosphate + S-adenosyl-L-homocysteine + H(+). It carries out the reaction N,N-dimethylethanolamine phosphate + S-adenosyl-L-methionine = phosphocholine + S-adenosyl-L-homocysteine + H(+). The protein operates within phospholipid metabolism; phosphatidylcholine biosynthesis; phosphocholine from phosphoethanolamine: step 1/1. Its activity is regulated as follows. Inhibited by phosphatidic acid. Its function is as follows. Involved in phosphocholine biosynthesis. Catalyzes the N-methylation of phosphoethanolamine, phosphomonomethylethanolamine and phosphodimethylethanolamine, the three methylation steps required to convert phosphoethanolamine to phosphocholine (PC). The polypeptide is Phosphoethanolamine N-methyltransferase 1 (Triticum aestivum (Wheat)).